We begin with the raw amino-acid sequence, 63 residues long: Sperm protamine P1 (63 aa).

The disordered stretch occupies residues 1–63 (MARYRRHSRS…RYSRRGRRRY (63 aa)).

Belongs to the protamine P1 family. In terms of tissue distribution, testis.

Its subcellular location is the nucleus. It localises to the chromosome. In terms of biological role, protamines substitute for histones in the chromatin of sperm during the haploid phase of spermatogenesis. They compact sperm DNA into a highly condensed, stable and inactive complex. The protein is Sperm protamine P1 (PRM1) of Phascogale tapoatafa (Common wambenger).